A 512-amino-acid polypeptide reads, in one-letter code: MKKIQFFDTTLRDGEQTPGVNFDVKEKIQIALQLEKLGIDVIEAGFPISSPGDFECVRAIAKAIKHCSVTGLARCVEGDIDRAEEALKEAVSPQIHIFLATSDVHMEYKLKMSRAEVLASIKHHIHYARQKFDIVQFSPEDATRSDRAFLIEAVQTAIDAGATVINIPDTVGYTNPTEFGQLFQDLRREIKQFDDIIFASHCHDDLGMATANALAAIENGARRVEGTINGIGERAGNTALEEVAVALHIRKDFYQAETNIVLNQFKNSSDLISRLSGMPVPRNKAVIGGNAYAHESGIHQDGVLKNPDTYEIITPALVGVDKNSLPLGKLSGKHAFHTRMEEMGYTLSEQELKDTFKRFKQLADAKKEVTEEDLHALILGQSSESTDNFELKHLQVQYVSGGVQGAIVRIEERDGALIEDAATGSGSIEAIYNTINRLMKQDIELIDYRIQAITAGQDAQAEVHVVIKDNNETEFHGIGIDFDVLTASAKAYLQASGKSKSTTKQVDFEEVK.

The Pyruvate carboxyltransferase domain maps to 4 to 266; the sequence is IQFFDTTLRD…ETNIVLNQFK (263 aa). Residues Asp13, His201, His203, and Asn237 each coordinate Mn(2+). The segment at 390 to 512 is regulatory domain; sequence ELKHLQVQYV…TKQVDFEEVK (123 aa).

Belongs to the alpha-IPM synthase/homocitrate synthase family. LeuA type 1 subfamily. Homodimer. Requires Mn(2+) as cofactor.

The protein resides in the cytoplasm. The enzyme catalyses 3-methyl-2-oxobutanoate + acetyl-CoA + H2O = (2S)-2-isopropylmalate + CoA + H(+). It functions in the pathway amino-acid biosynthesis; L-leucine biosynthesis; L-leucine from 3-methyl-2-oxobutanoate: step 1/4. Catalyzes the condensation of the acetyl group of acetyl-CoA with 3-methyl-2-oxobutanoate (2-ketoisovalerate) to form 3-carboxy-3-hydroxy-4-methylpentanoate (2-isopropylmalate). The protein is 2-isopropylmalate synthase of Listeria welshimeri serovar 6b (strain ATCC 35897 / DSM 20650 / CCUG 15529 / CIP 8149 / NCTC 11857 / SLCC 5334 / V8).